A 330-amino-acid polypeptide reads, in one-letter code: Ferredoxin--NADP reductase (330 aa).

Residues Thr-18, Glu-37, Gln-45, Tyr-50, Val-90, Phe-124, Asp-286, and Thr-327 each contribute to the FAD site.

Belongs to the ferredoxin--NADP reductase type 2 family. As to quaternary structure, homodimer. The cofactor is FAD.

It carries out the reaction 2 reduced [2Fe-2S]-[ferredoxin] + NADP(+) + H(+) = 2 oxidized [2Fe-2S]-[ferredoxin] + NADPH. The protein is Ferredoxin--NADP reductase of Halalkalibacterium halodurans (strain ATCC BAA-125 / DSM 18197 / FERM 7344 / JCM 9153 / C-125) (Bacillus halodurans).